Reading from the N-terminus, the 89-residue chain is Neurotoxin LmNaTx28 (89 aa).

A signal peptide spans 1–18 (MNLPTVLCIIALILGVRS). The 66-residue stretch at 20–85 (KNGFFTKLGK…VADSSEKACQ (66 aa)) folds into the LCN-type CS-alpha/beta domain. 4 disulfides stabilise this stretch: Cys-33-Cys-57, Cys-43-Cys-62, Cys-47-Cys-64, and Cys-58-Cys-84.

It belongs to the long (4 C-C) scorpion toxin superfamily. Sodium channel inhibitor family. Beta subfamily. In terms of tissue distribution, expressed by the venom gland.

The protein resides in the secreted. Functionally, binds voltage-independently at site-4 of sodium channels (Nav) and shift the voltage of activation toward more negative potentials thereby affecting sodium channel activation and promoting spontaneous and repetitive firing. The sequence is that of Neurotoxin LmNaTx28 from Lychas mucronatus (Chinese swimming scorpion).